The chain runs to 320 residues: Lipoyl synthase (320 aa).

Cysteine 67, cysteine 72, cysteine 78, cysteine 93, cysteine 97, cysteine 100, and serine 307 together coordinate [4Fe-4S] cluster. The 218-residue stretch at 79-296 (FNHGTATFMI…RDKANEMGFE (218 aa)) folds into the Radical SAM core domain.

Belongs to the radical SAM superfamily. Lipoyl synthase family. [4Fe-4S] cluster is required as a cofactor.

The protein resides in the cytoplasm. The catalysed reaction is [[Fe-S] cluster scaffold protein carrying a second [4Fe-4S](2+) cluster] + N(6)-octanoyl-L-lysyl-[protein] + 2 oxidized [2Fe-2S]-[ferredoxin] + 2 S-adenosyl-L-methionine + 4 H(+) = [[Fe-S] cluster scaffold protein] + N(6)-[(R)-dihydrolipoyl]-L-lysyl-[protein] + 4 Fe(3+) + 2 hydrogen sulfide + 2 5'-deoxyadenosine + 2 L-methionine + 2 reduced [2Fe-2S]-[ferredoxin]. Its pathway is protein modification; protein lipoylation via endogenous pathway; protein N(6)-(lipoyl)lysine from octanoyl-[acyl-carrier-protein]: step 2/2. Catalyzes the radical-mediated insertion of two sulfur atoms into the C-6 and C-8 positions of the octanoyl moiety bound to the lipoyl domains of lipoate-dependent enzymes, thereby converting the octanoylated domains into lipoylated derivatives. This is Lipoyl synthase from Haemophilus influenzae (strain PittGG).